Consider the following 385-residue polypeptide: Putative nickel insertion protein (385 aa).

Belongs to the LarC family.

The sequence is that of Putative nickel insertion protein from Citrifermentans bemidjiense (strain ATCC BAA-1014 / DSM 16622 / JCM 12645 / Bem) (Geobacter bemidjiensis).